Here is a 561-residue protein sequence, read N- to C-terminus: Tetracenomycin A2 monooxygenase-dioxygenase (561 aa).

FAD is bound by residues L15, E35, Q128, and M152. Catalysis depends on Y231, which acts as the Proton acceptor. An FAD-binding site is contributed by D322.

It belongs to the PheA/TfdB FAD monooxygenase family. As to quaternary structure, monomer. May form oligomers up to homohexamers. It depends on FAD as a cofactor.

The catalysed reaction is tetracenomycin A2 + 2 NADPH + 2 O2 + 2 H(+) = tetracenomycin C + 2 NADP(+) + H2O. Its pathway is antibiotic biosynthesis; tetracenomycin C biosynthesis. Its function is as follows. Involved in the biosynthesis of tetracenomycin C (TCM C). Catalyzes the triple hydroxylation of tetracenomycin A2 (TCM A2) at positions C-4, C-4a and C-12a to give tetracenomycin C (TCM C). Can use either NADH or NADPH as electron donors, but prefers NADPH under physiological conditions. The sequence is that of Tetracenomycin A2 monooxygenase-dioxygenase from Streptomyces glaucescens.